A 527-amino-acid polypeptide reads, in one-letter code: Catalase (527 aa).

The segment covering 1–22 (MADSRDPASDQMKHWKEERAAQ) has biased composition (basic and acidic residues). Residues 1–32 (MADSRDPASDQMKHWKEERAAQKPDVLTTAGG) form a disordered region. At Ala-2 the chain carries N-acetylalanine. Ser-9 carries the post-translational modification Phosphoserine. Lys-13 bears the N6-succinyllysine mark. Catalysis depends on residues His-75 and Asn-148. NADP(+)-binding residues include His-194, Ser-201, Arg-203, and Asn-213. Lys-221 carries the post-translational modification N6-succinyllysine. N6-acetyllysine is present on Lys-233. The NADP(+) site is built by Lys-237, Trp-303, His-305, and Lys-306. N6-acetyllysine; alternate is present on Lys-306. Residue Lys-306 is modified to N6-succinyllysine; alternate. Tyr-358 serves as a coordination point for heme. Phosphoserine is present on Ser-434. Lys-480 is subject to N6-acetyllysine; alternate. An N6-succinyllysine; alternate modification is found at Lys-480. Position 499 is an N6-acetyllysine (Lys-499). Thr-511 carries the post-translational modification Phosphothreonine. Ser-517 is subject to Phosphoserine. Residue Lys-522 is modified to N6-succinyllysine. Positions 524 to 527 (KANL) match the Microbody targeting signal; atypical motif.

Belongs to the catalase family. In terms of assembly, homotetramer. Interacts (via microbody targeting signal) with PEX5, monomeric form interacts with PEX5, leading to its translocation into peroxisomes. Heme is required as a cofactor. NADP(+) serves as cofactor.

The protein localises to the peroxisome matrix. It carries out the reaction 2 H2O2 = O2 + 2 H2O. Its function is as follows. Catalyzes the degradation of hydrogen peroxide (H(2)O(2)) generated by peroxisomal oxidases to water and oxygen, thereby protecting cells from the toxic effects of hydrogen peroxide. Promotes growth of cells including T-cells, B-cells, myeloid leukemia cells, melanoma cells, mastocytoma cells and normal and transformed fibroblast cells. This chain is Catalase (CAT), found in Cavia porcellus (Guinea pig).